Consider the following 395-residue polypeptide: ATP phosphoribosyltransferase regulatory subunit (395 aa).

Belongs to the class-II aminoacyl-tRNA synthetase family. HisZ subfamily. Heteromultimer composed of HisG and HisZ subunits.

It is found in the cytoplasm. The protein operates within amino-acid biosynthesis; L-histidine biosynthesis; L-histidine from 5-phospho-alpha-D-ribose 1-diphosphate: step 1/9. In terms of biological role, required for the first step of histidine biosynthesis. May allow the feedback regulation of ATP phosphoribosyltransferase activity by histidine. The chain is ATP phosphoribosyltransferase regulatory subunit from Pseudomonas entomophila (strain L48).